The following is a 115-amino-acid chain: Large ribosomal subunit protein bL20 (115 aa).

This sequence belongs to the bacterial ribosomal protein bL20 family.

Binds directly to 23S ribosomal RNA and is necessary for the in vitro assembly process of the 50S ribosomal subunit. It is not involved in the protein synthesizing functions of that subunit. In Prochlorococcus marinus (strain MIT 9215), this protein is Large ribosomal subunit protein bL20.